The primary structure comprises 95 residues: DNA-directed RNA polymerase subunit Rpo11 (95 aa).

It belongs to the archaeal Rpo11/eukaryotic RPB11/RPC19 RNA polymerase subunit family. In terms of assembly, part of the RNA polymerase complex.

It localises to the cytoplasm. It catalyses the reaction RNA(n) + a ribonucleoside 5'-triphosphate = RNA(n+1) + diphosphate. DNA-dependent RNA polymerase (RNAP) catalyzes the transcription of DNA into RNA using the four ribonucleoside triphosphates as substrates. This is DNA-directed RNA polymerase subunit Rpo11 from Thermococcus onnurineus (strain NA1).